A 62-amino-acid polypeptide reads, in one-letter code: DNA-directed RNA polymerase subunit Rpo10 (62 aa).

Zn(2+)-binding residues include cysteine 6, cysteine 9, cysteine 43, and cysteine 44.

This sequence belongs to the archaeal Rpo10/eukaryotic RPB10 RNA polymerase subunit family. Part of the RNA polymerase complex. Zn(2+) is required as a cofactor.

It localises to the cytoplasm. It catalyses the reaction RNA(n) + a ribonucleoside 5'-triphosphate = RNA(n+1) + diphosphate. Its function is as follows. DNA-dependent RNA polymerase (RNAP) catalyzes the transcription of DNA into RNA using the four ribonucleoside triphosphates as substrates. In Methanococcoides burtonii (strain DSM 6242 / NBRC 107633 / OCM 468 / ACE-M), this protein is DNA-directed RNA polymerase subunit Rpo10.